Here is a 933-residue protein sequence, read N- to C-terminus: Clumping factor A (933 aa).

An N-terminal signal peptide occupies residues 1-39 (MNMKKKEKHAIRKKSIGVASVLVGTLIGFGLLSSKEADA). The short motif at 9 to 20 (HAIRKKSIGVAS) is the YSIRK-G/S signaling motif element. Disordered stretches follow at residues 34-200 (SKEA…SNKD) and 529-904 (FNNG…SEDE). The ligand binding A region stretch occupies residues 40–542 (SENSVTQSDS…SGSGDGIDKP (503 aa)). The span at 47–65 (SDSASNESKSNDSSSVSAA) shows a compositional bias: low complexity. Polar residues predominate over residues 71–105 (TNVSDTKTSSNTNNGETSVAQNPAQQETTQSSSTN). 2 stretches are compositionally biased toward low complexity: residues 106–132 (ATTEETPVTGEATTTTTNQANTPATTQ) and 143–162 (NQTSNETTSNDTNTVSSVNS). The span at 163-200 (PQNSTNAENVSTTQDTSTEATPSNNESAPQSTDASNKD) shows a compositional bias: polar residues. Residues 547 to 565 (QPDEPGEIEPIPEDSDSDP) show a composition bias toward acidic residues. The segment covering 566 to 598 (GSDSGSDSNSDSGSDSGSDSTSDSGSDSASDSD) has biased composition (low complexity). Residues 599–861 (SASDSDSASD…DSDSESDSNS (263 aa)) are compositionally biased toward acidic residues. Residues 862 to 880 (DSESGSNNNVVPPNSPKNG) are compositionally biased toward low complexity. The segment covering 887-896 (NEAKDSKEPL) has biased composition (basic and acidic residues). An LPXTG sorting signal motif is present at residues 896-900 (LPDTG). Pentaglycyl murein peptidoglycan amidated threonine is present on Thr-899. Residues 900 to 933 (GSEDEANTSLIWGLLASIGSLLLFRRKKENKDKK) constitute a propeptide, removed by sortase.

The protein belongs to the serine-aspartate repeat-containing protein (SDr) family.

The protein resides in the secreted. It localises to the cell wall. Its function is as follows. Cell surface-associated protein implicated in virulence. Promotes bacterial attachment exclusively to the gamma-chain of human fibrinogen. Induces formation of bacterial clumps. The sequence is that of Clumping factor A (clfA) from Staphylococcus aureus (strain COL).